We begin with the raw amino-acid sequence, 213 residues long: Glutathione S-transferase PARB (213 aa).

The 82-residue stretch at 1 to 82 (MAIKVHGSPM…YIAHVYADNG (82 aa)) folds into the GST N-terminal domain. Residues Ser-11, 12–13 (TA), 40–41 (HK), 53–54 (QV), and 66–67 (ES) contribute to the glutathione site. The GST C-terminal domain occupies 89-213 (DPKKMPSMSV…WVKGLEKLQK (125 aa)).

Belongs to the GST superfamily. Phi family.

The enzyme catalyses RX + glutathione = an S-substituted glutathione + a halide anion + H(+). In terms of biological role, conjugation of reduced glutathione to a wide number of exogenous and endogenous hydrophobic electrophiles. The protein is Glutathione S-transferase PARB of Nicotiana tabacum (Common tobacco).